A 616-amino-acid chain; its full sequence is MIINRRILKSFEEISHSLEESLREVAFDSQQQLIQDVREENEELSRLQDQLQLIRSIVEKICISIKTDNIDSYCSVPFDLLYNICKDIADPSSFEDGDLQYLVSQAIFEYIILLCYYSVTNECVQGLPAVYEAEQYYKTVSDSILKSFLYCLQNSVSTIRLLSQTVLKDVNKKKLSHQKWSLKALSVDLLEKIRPRINKFMVIRNFRFVGLPKKPIEIASLVSDIPRGIVHERLDMVTQSSKYYTIKLGQLITEFDQQPEENGMFTEVHLPNYERRLKSLQDFFGLAMSDSNLLDVIRCSAKFHKDHPLRRFTKPSILTRYWPSILLCLLYGPSSVMSLWNSRYFIQDFIKTNVVDFAKGLILNWLWAPLKQVWSTVKHDEGSAISVTSQETLNSDMDSLTRMIVSFVVDNSDSTSNSPIDPILLSTKVEHGDLTEFMEIYETQLHHPIKNIATGGLVRSLLIQLQKTKVDGSMALNGIDKMLKSQQLVFGVVALSPALVILYSSIVALKRFVKLGNVWSNEKRYREQISISLNNVERVLNYSKQGADADEEHLNQGLLVIEVSNLYKLGSFLIPRSRKKEWFRDVEELVDTNLDSGAHINVVNRIYHVYGRFLIH.

Ser29 bears the Phosphoserine mark. 2 consecutive transmembrane segments (helical) span residues 321–341 (YWPS…SLWN) and 488–508 (LVFG…SIVA).

The protein belongs to the NCA2 family.

Its subcellular location is the mitochondrion membrane. In terms of biological role, involved in the mitochondrial expression of subunits 6 and 8 of the F0-F1 ATP synthase. The chain is Nuclear control of ATPase protein 2 (NCA2) from Saccharomyces cerevisiae (strain ATCC 204508 / S288c) (Baker's yeast).